The chain runs to 350 residues: Guanine nucleotide-binding protein G(t) subunit alpha (350 aa).

The disordered stretch occupies residues 1–21 (MGAGASAEEKHSRELEKKLKE). Glycine 2 is lipidated: N-myristoyl glycine. Residues 7–21 (AEEKHSRELEKKLKE) show a composition bias toward basic and acidic residues. One can recognise a G-alpha domain in the interval 28-350 (RTVKLLLLGA…KENLKDCGLF (323 aa)). Residues 31–44 (KLLLLGAGESGKST) are G1 motif. Residues 36–43 (GAGESGKS), 171–177 (LRSRVKT), 196–200 (DVGGQ), 265–268 (NKKD), and alanine 322 contribute to the GTP site. Serine 43 and threonine 177 together coordinate Mg(2+). A G2 motif region spans residues 169-177 (DVLRSRVKT). A G3 motif region spans residues 192 to 201 (FRMFDVGGQR). Residues 261-268 (VLFLNKKD) are G4 motif. Residues 320–325 (TCATDT) form a G5 motif region.

The protein belongs to the G-alpha family. G(i/o/t/z) subfamily. In terms of assembly, g proteins are composed of 3 units; alpha, beta and gamma. The alpha chain contains the guanine nucleotide binding site.

Guanine nucleotide-binding proteins (G proteins) are involved as modulators or transducers in various transmembrane signaling systems. Transducin is an amplifier and one of the transducers of a visual impulse that performs the coupling between rhodopsin and cGMP-phosphodiesterase. The sequence is that of Guanine nucleotide-binding protein G(t) subunit alpha (gnat) from Xenopus laevis (African clawed frog).